The sequence spans 185 residues: Protein GrpE (185 aa).

The tract at residues Met1–Pro22 is disordered.

This sequence belongs to the GrpE family. Homodimer.

Its subcellular location is the cytoplasm. Participates actively in the response to hyperosmotic and heat shock by preventing the aggregation of stress-denatured proteins, in association with DnaK and GrpE. It is the nucleotide exchange factor for DnaK and may function as a thermosensor. Unfolded proteins bind initially to DnaJ; upon interaction with the DnaJ-bound protein, DnaK hydrolyzes its bound ATP, resulting in the formation of a stable complex. GrpE releases ADP from DnaK; ATP binding to DnaK triggers the release of the substrate protein, thus completing the reaction cycle. Several rounds of ATP-dependent interactions between DnaJ, DnaK and GrpE are required for fully efficient folding. The chain is Protein GrpE from Bordetella petrii (strain ATCC BAA-461 / DSM 12804 / CCUG 43448).